Reading from the N-terminus, the 239-residue chain is Major centromere autoantigen B (239 aa).

The segment at Ala28–Gly185 is disordered. Phosphothreonine occurs at positions 37 and 39. 2 stretches are compositionally biased toward acidic residues: residues Gly46–Asp117 and Gly148–Val179. The segment at Asp176–Ser239 is homodimerization.

Antiparallel homodimer. Interacts with CENPT. Identified in a centromere complex containing histones H2A, H2B and H4, and at least CENPA, CENPB, CENPC, CENPT, CENPN, HJURP, SUPT16H, SSRP1 and RSF1. Post-translationally, poly-ADP-ribosylated by PARP1. In terms of processing, N-terminally methylated by METTL11A/NTM1. Alpha-N-methylation is stimulated in response extracellular stimuli, including increased cell density and heat shock, and seems to facilitate binding to CENP-B boxes. Chromatin-bound CENP-B is primarily trimethylated.

It localises to the nucleus. It is found in the chromosome. The protein resides in the centromere. Its function is as follows. Interacts with centromeric heterochromatin in chromosomes and binds to a specific 17 bp subset of alphoid satellite DNA, called the CENP-B box. May organize arrays of centromere satellite DNA into a higher-order structure which then directs centromere formation and kinetochore assembly in mammalian chromosomes. This is Major centromere autoantigen B (CENPB) from Ovis aries (Sheep).